A 149-amino-acid polypeptide reads, in one-letter code: NADH-quinone oxidoreductase subunit I 1 (149 aa).

4Fe-4S ferredoxin-type domains follow at residues leucine 51–threonine 82 and threonine 93–glutamate 122. [4Fe-4S] cluster contacts are provided by cysteine 62, cysteine 65, cysteine 68, cysteine 72, cysteine 102, cysteine 105, cysteine 108, and cysteine 112.

It belongs to the complex I 23 kDa subunit family. In terms of assembly, NDH-1 is composed of 14 different subunits. Subunits NuoA, H, J, K, L, M, N constitute the membrane sector of the complex. The cofactor is [4Fe-4S] cluster.

The protein localises to the cell inner membrane. The enzyme catalyses a quinone + NADH + 5 H(+)(in) = a quinol + NAD(+) + 4 H(+)(out). Its function is as follows. NDH-1 shuttles electrons from NADH, via FMN and iron-sulfur (Fe-S) centers, to quinones in the respiratory chain. The immediate electron acceptor for the enzyme in this species is believed to be ubiquinone. Couples the redox reaction to proton translocation (for every two electrons transferred, four hydrogen ions are translocated across the cytoplasmic membrane), and thus conserves the redox energy in a proton gradient. The protein is NADH-quinone oxidoreductase subunit I 1 of Syntrophobacter fumaroxidans (strain DSM 10017 / MPOB).